Consider the following 306-residue polypeptide: Porphobilinogen deaminase (306 aa).

At cysteine 244 the chain carries S-(dipyrrolylmethanemethyl)cysteine.

Belongs to the HMBS family. As to quaternary structure, monomer. The cofactor is dipyrromethane.

It catalyses the reaction 4 porphobilinogen + H2O = hydroxymethylbilane + 4 NH4(+). Its pathway is porphyrin-containing compound metabolism; protoporphyrin-IX biosynthesis; coproporphyrinogen-III from 5-aminolevulinate: step 2/4. Its function is as follows. Tetrapolymerization of the monopyrrole PBG into the hydroxymethylbilane pre-uroporphyrinogen in several discrete steps. The protein is Porphobilinogen deaminase of Streptococcus sanguinis (strain SK36).